Consider the following 461-residue polypeptide: Cysteine--tRNA ligase (461 aa).

C29 is a binding site for Zn(2+). The short motif at 31–41 (MTIYDLCHVGH) is the 'HIGH' region element. Zn(2+) contacts are provided by C213, H238, and E242. The short motif at 274-278 (KMSKS) is the 'KMSKS' region element. K277 is a binding site for ATP.

This sequence belongs to the class-I aminoacyl-tRNA synthetase family. In terms of assembly, monomer. It depends on Zn(2+) as a cofactor.

Its subcellular location is the cytoplasm. The catalysed reaction is tRNA(Cys) + L-cysteine + ATP = L-cysteinyl-tRNA(Cys) + AMP + diphosphate. The protein is Cysteine--tRNA ligase of Methylibium petroleiphilum (strain ATCC BAA-1232 / LMG 22953 / PM1).